The chain runs to 722 residues: Probable dipeptidyl-peptidase 5 (722 aa).

Residues 1–18 form the signal peptide; the sequence is MGALRWLSLAAAASSALA. Asparagine 75, asparagine 78, asparagine 86, asparagine 94, asparagine 151, asparagine 253, and asparagine 448 each carry an N-linked (GlcNAc...) asparagine glycan. Serine 558 (charge relay system) is an active-site residue. Residue asparagine 605 is glycosylated (N-linked (GlcNAc...) asparagine). Catalysis depends on charge relay system residues aspartate 641 and histidine 673.

Belongs to the peptidase S9C family.

Its subcellular location is the secreted. Its function is as follows. Extracellular dipeptidyl-peptidase which removes N-terminal dipeptides sequentially from polypeptides having unsubstituted N-termini. The sequence is that of Probable dipeptidyl-peptidase 5 (dpp5) from Emericella nidulans (strain FGSC A4 / ATCC 38163 / CBS 112.46 / NRRL 194 / M139) (Aspergillus nidulans).